The following is an 846-amino-acid chain: MASSSLSNLMLAIHEKKTSSVDLYRPLRNYVTFTYSEREAQLIDDDLETLKQLRSDIERVSDPSPAARRDLLISYYKVLCLVETRFPISPDKDHVNAVSFVWYDAFKQKHKATQQNIHLEKAAVLFNLGASYSQIGLGHDRTTVDGRRQASHAFMAAAGAFAHLRDNESIKATIGPSTTVDVSVECVGMLERLMVAQAQECVFENTIAKGSTPGVSAKIARQVGIFYEEALSALIISPLKDHFDKGWISHVQLKAALFYGEACFRYGKELHEKEEIAEEIARLRSGASRLAEAKKSSRGAPAQLIEAMNTLESSINGNLDRAVKENDRVYLMRVPSPSSLSPLPAFSMVKPMNMTDILDASKEKMFSILVPDSSAKALSRYTEMVDDVIRTQAERLQQASELTRVRLKEMDLPDSILAVDGNSALPVDLKEDVEAVQISGGPAGLEAELQQLRDLKRVNQELLVHTEELLQKEATEDSQFRSQFGTRWTRPQSSTLTKNLQDRLNRFAANLKQAGESDVKIERSVRDNSALMSILDRRPIESAVPTLARPIMSLDATEDAIVGTLKQSLRQLENLGAQRAGLEDMLKEMKRKDDILPKLMTITGSYEDMFRKEISKYDHICEDISQNIEVQEQLLMQIQAQNEEFSTIFNLEDYKASKEKCYKQIQAAIMKYREIKENINEGLKFYVTLQDAITNVKQQCSDFVMTRSIQCRDMIEDVQRQMSGLSFQDHRSSGPYPSVHQPTASSPPPPPETQNPSHPHPHAPYYRPPEQMSRPGYSIPPYGPPPPYHTPHGQAPQPYPPQAQQQPHPSWQQGSYYDPQGQQPRPPYPGQSPYQPPHQGGGYYRQ.

One can recognise a BRO1 domain in the interval 5–403 (SLSNLMLAIH…ERLQQASELT (399 aa)). Positions 565-592 (LKQSLRQLENLGAQRAGLEDMLKEMKRK) form a coiled coil. The disordered stretch occupies residues 726-846 (SFQDHRSSGP…PHQGGGYYRQ (121 aa)). Composition is skewed to low complexity over residues 763-780 (APYYRPPEQMSRPGYSIP) and 790-823 (TPHGQAPQPYPPQAQQQPHPSWQQGSYYDPQGQQ). The segment covering 824 to 836 (PRPPYPGQSPYQP) has biased composition (pro residues).

As to quaternary structure, homodimer. Interacts with AMSH3. Interacts with VPS32.1/SNF7B and VPS32.2/SNF7A. Interacts with ELC/VPS23A.

The protein resides in the cytoplasm. The protein localises to the late endosome. It localises to the endosome. It is found in the multivesicular body. Its function is as follows. Class E VPS protein involved in concentration and sorting of cargo proteins of the multivesicular body (MVB) for incorporation into intralumenal vesicles. Fusion between endosomes and the vacuole will then target the cargo proteins to the vacuolar lumen. Associates with FREE1 and ELC to perform function in the ESCRT-I complex. Binds ubiquitin in vitro. Plays a role in the biogenesis of vacuole and multivesicular bodies (MVBs). Required for the endosomal location of AMSH3. Mediates high-affinity phosphate transporter trafficking to maintain phosphate homeostasis. Regulates vacuolar degradation of PHT1-1. The polypeptide is Vacuolar-sorting protein BRO1 (Arabidopsis thaliana (Mouse-ear cress)).